Here is a 305-residue protein sequence, read N- to C-terminus: tRNA pseudouridine synthase B (305 aa).

The active-site Nucleophile is Asp39.

This sequence belongs to the pseudouridine synthase TruB family. Type 1 subfamily.

The catalysed reaction is uridine(55) in tRNA = pseudouridine(55) in tRNA. In terms of biological role, responsible for synthesis of pseudouridine from uracil-55 in the psi GC loop of transfer RNAs. This chain is tRNA pseudouridine synthase B, found in Staphylococcus epidermidis (strain ATCC 35984 / DSM 28319 / BCRC 17069 / CCUG 31568 / BM 3577 / RP62A).